Here is a 233-residue protein sequence, read N- to C-terminus: Large ribosomal subunit protein uL1 (233 aa).

It belongs to the universal ribosomal protein uL1 family. As to quaternary structure, part of the 50S ribosomal subunit.

Its function is as follows. Binds directly to 23S rRNA. The L1 stalk is quite mobile in the ribosome, and is involved in E site tRNA release. Functionally, protein L1 is also a translational repressor protein, it controls the translation of the L11 operon by binding to its mRNA. In Psychrobacter sp. (strain PRwf-1), this protein is Large ribosomal subunit protein uL1.